A 121-amino-acid chain; its full sequence is Putative iron-sulfur cluster insertion protein ErpA (121 aa).

Cys49, Cys113, and Cys115 together coordinate iron-sulfur cluster.

Belongs to the HesB/IscA family. In terms of assembly, homodimer. Iron-sulfur cluster is required as a cofactor.

In terms of biological role, required for insertion of 4Fe-4S clusters. This is Putative iron-sulfur cluster insertion protein ErpA from Polaromonas sp. (strain JS666 / ATCC BAA-500).